A 434-amino-acid chain; its full sequence is Cobyrinate a,c-diamide synthase (434 aa).

Residues lysine 239–leucine 430 enclose the GATase cobBQ-type domain. Cysteine 320 serves as the catalytic Nucleophile.

This sequence belongs to the CobB/CbiA family. It depends on Mg(2+) as a cofactor.

The catalysed reaction is cob(II)yrinate + 2 L-glutamine + 2 ATP + 2 H2O = cob(II)yrinate a,c diamide + 2 L-glutamate + 2 ADP + 2 phosphate + 2 H(+). Its pathway is cofactor biosynthesis; adenosylcobalamin biosynthesis; cob(II)yrinate a,c-diamide from sirohydrochlorin (anaerobic route): step 10/10. Catalyzes the ATP-dependent amidation of the two carboxylate groups at positions a and c of cobyrinate, using either L-glutamine or ammonia as the nitrogen source. This chain is Cobyrinate a,c-diamide synthase, found in Saccharolobus solfataricus (strain ATCC 35092 / DSM 1617 / JCM 11322 / P2) (Sulfolobus solfataricus).